Here is a 689-residue protein sequence, read N- to C-terminus: Glycine--tRNA ligase beta subunit (689 aa).

This sequence belongs to the class-II aminoacyl-tRNA synthetase family. Tetramer of two alpha and two beta subunits.

It localises to the cytoplasm. It catalyses the reaction tRNA(Gly) + glycine + ATP = glycyl-tRNA(Gly) + AMP + diphosphate. The protein is Glycine--tRNA ligase beta subunit of Desulforapulum autotrophicum (strain ATCC 43914 / DSM 3382 / VKM B-1955 / HRM2) (Desulfobacterium autotrophicum).